A 78-amino-acid chain; its full sequence is Large ribosomal subunit protein bL28 (78 aa).

This sequence belongs to the bacterial ribosomal protein bL28 family.

This chain is Large ribosomal subunit protein bL28, found in Flavobacterium johnsoniae (strain ATCC 17061 / DSM 2064 / JCM 8514 / BCRC 14874 / CCUG 350202 / NBRC 14942 / NCIMB 11054 / UW101) (Cytophaga johnsonae).